The following is an 895-amino-acid chain: DNA mismatch repair protein MutS (895 aa).

632 to 639 (GPNMAGKS) contributes to the ATP binding site. A disordered region spans residues 824 to 849 (VTQDKKQVKKQTKNNHSARSGSRQQQ). Residues 837 to 849 (NNHSARSGSRQQQ) are compositionally biased toward polar residues.

It belongs to the DNA mismatch repair MutS family.

Functionally, this protein is involved in the repair of mismatches in DNA. It is possible that it carries out the mismatch recognition step. This protein has a weak ATPase activity. The chain is DNA mismatch repair protein MutS from Desulforapulum autotrophicum (strain ATCC 43914 / DSM 3382 / VKM B-1955 / HRM2) (Desulfobacterium autotrophicum).